The chain runs to 98 residues: Integration host factor subunit beta (98 aa).

The protein belongs to the bacterial histone-like protein family. Heterodimer of an alpha and a beta chain.

Its function is as follows. This protein is one of the two subunits of integration host factor, a specific DNA-binding protein that functions in genetic recombination as well as in transcriptional and translational control. This Pseudomonas putida (strain GB-1) protein is Integration host factor subunit beta.